A 248-amino-acid polypeptide reads, in one-letter code: PF03932 family protein CutC (248 aa).

The protein belongs to the CutC family. In terms of assembly, homodimer.

The protein localises to the cytoplasm. The sequence is that of PF03932 family protein CutC from Escherichia coli (strain SMS-3-5 / SECEC).